A 96-amino-acid chain; its full sequence is Cytochrome c-553 (96 aa).

A signal peptide spans 1–19; that stretch reads MKKVIMALGVLAFANALMA. Residues C29, C32, H33, and M73 each contribute to the heme c site.

It belongs to the cytochrome c family. Post-translationally, binds 1 heme c group covalently per subunit.

Its subcellular location is the periplasm. Natural electron acceptor for a formate dehydrogenase. The chain is Cytochrome c-553 from Helicobacter pylori (strain ATCC 700392 / 26695) (Campylobacter pylori).